We begin with the raw amino-acid sequence, 120 residues long: NAD(P)H-quinone oxidoreductase subunit 3 (120 aa).

Helical transmembrane passes span 7–27, 64–84, and 89–109; these read YEYVLGFLLACSLIPILALTA, MFALVFVVFDVETVFLYPWAV, and LGLLAFVEALIFIAILVVALV.

This sequence belongs to the complex I subunit 3 family. In terms of assembly, NDH-1 can be composed of about 15 different subunits; different subcomplexes with different compositions have been identified which probably have different functions.

It is found in the cellular thylakoid membrane. The catalysed reaction is a plastoquinone + NADH + (n+1) H(+)(in) = a plastoquinol + NAD(+) + n H(+)(out). It catalyses the reaction a plastoquinone + NADPH + (n+1) H(+)(in) = a plastoquinol + NADP(+) + n H(+)(out). Its function is as follows. NDH-1 shuttles electrons from an unknown electron donor, via FMN and iron-sulfur (Fe-S) centers, to quinones in the respiratory and/or the photosynthetic chain. The immediate electron acceptor for the enzyme in this species is believed to be plastoquinone. Couples the redox reaction to proton translocation, and thus conserves the redox energy in a proton gradient. Cyanobacterial NDH-1 also plays a role in inorganic carbon-concentration. This chain is NAD(P)H-quinone oxidoreductase subunit 3, found in Crocosphaera subtropica (strain ATCC 51142 / BH68) (Cyanothece sp. (strain ATCC 51142)).